We begin with the raw amino-acid sequence, 90 residues long: Small ribosomal subunit protein uS15c (90 aa).

It belongs to the universal ribosomal protein uS15 family. In terms of assembly, part of the 30S ribosomal subunit.

The protein localises to the plastid. It is found in the chloroplast. This is Small ribosomal subunit protein uS15c (rps15) from Secale cereale (Rye).